Here is a 507-residue protein sequence, read N- to C-terminus: Monoogygenase CPUR_05431 (507 aa).

It belongs to the PheA/TfdB FAD monooxygenase family. Requires FAD as cofactor.

The protein operates within pigment biosynthesis. Functionally, monoogygenase; part of the ergochrome gene cluster responsible for the typical purple-black color of the ergot sclerotia. The ergochrome gene cluster produces several ergot pigments including the yellow ergochrome secalonic acid and its derivatives, as well as the red anthraquinones endocrocin and clavorubin. The pathway begins with the synthesis of atrochrysone thioester by the polyketide synthase (PKS) CPUR_05437. The atrochrysone carboxyl ACP thioesterase CPUR_05436 then breaks the thioester bond and releases the atrochrysone carboxylic acid from CPUR_05437. The atrochrysone carboxylic acid is then converted to atrochrysone which is further transformed into emodin anthrone. The next step is performed by the anthrone oxygenase CPUR_05434 that catalyzes the oxidation of emodinanthrone to emodin. Emodin is further modified to yield monodictyphenone via several steps involving CPUR_05427, CPUR_05428, CPUR_05429 and CPUR_05430. The short chain dehydrogenase/reductase CPUR_05418 then catalyzes the C-5 ketoreduction to give the xanthone skeleton of the monomeric units. Ergochromes formation requires further dimerization steps of different xanthone units, probably catalyzed by the cytochrome P450 monooxygenase CPUR_05419. CPUR_05425, CPUR_05426 and CPUR_05431 are unique to Claviceps, thus it is likely that they are involved in further modification of xanthone units or in their dimerization. The yellow ergochromes and the red anthraquinone pigments endocrocin and clavorubin are products from the same PKS derived precursors and the latter are likely shunt products in the pathway of xanthone biosynthesis. It is proposed that atrochrysone carboxylic acid released from the PKS CPUR_05437 can also be converted to endocrocin anthrone which is further oxidized into endocrocin by CPUR_05435. Endocrocin could be then modified to clavorubin, possibly by CPUR_05423 and CPUR_05431. Clavorubin is the principal anthraquinone metabolite produced by the cluster with a much higher yield compared to endocrocin. The chain is Monoogygenase CPUR_05431 from Claviceps purpurea (strain 20.1) (Ergot fungus).